Here is a 509-residue protein sequence, read N- to C-terminus: MTISPIPGLLFVYDQPPHSIYVLPFVISAAALCYFIGLIVFNLWFHPLARFPGPLLARSTLLWRMRMTLKGRIHRSIEAGHQKYGPVLRVAPNELSFASVSSWKSIYGHRPGGMIPTKSEFYDMYGSGFNSLCIGSERDPEKHRQMKSFLSAAFSTKALLEQEPLVSQTVDAFITRLGNDGGSETKGLDMTKWTEMVAFDILGEMAFGQSFECIIRGEPHYWQEMILKHLYFITVADNLRRLPFALTLARFLAPVLTAVRNKHSQFTRDKVAERMTNKNLRKDFMSNLISKVESGEVDREEMTAHASTLIIAGGETVATFLAATVYYLLKTPEVYKAMREEIRNRFPTYESINATSAQQLPYLQAVINEGLRIYPPGSQGFPRLSPGLAIDGEWIPEGTEIYTSAWTVTHNPQMFKDPMKFDPNRWLNEKSTDIKESSQPFSLGPRGCLGRNFALMELNLILSKLCWKYDMELMDQSLDWEGQSKVHVMWDKPALTVRFHSVDGSTLKA.

2 helical membrane passes run 20–40 (IYVL…GLIV) and 309–329 (LIIA…YYLL). Asn-353 carries N-linked (GlcNAc...) asparagine glycosylation. Residue Cys-448 participates in heme binding.

Belongs to the cytochrome P450 family. Requires heme as cofactor.

The protein resides in the membrane. It participates in sesquiterpene biosynthesis. Its function is as follows. Cytochrome P450 monooxygenase; part of the gene cluster that mediates the biosynthesis of PR-toxin, a bicyclic sesquiterpene belonging to the eremophilane class and acting as a mycotoxin. The first step of the pathway is catalyzed by the aristolochene synthase which performs the cyclization of trans,trans-farnesyl diphosphate (FPP) to the bicyclic sesquiterpene aristolochene. Following the formation of aristolochene, the non-oxygenated aristolochene is converted to the trioxygenated intermediate eremofortin B, via 7-epi-neopetasone. This conversion appears to involve three enzymes, a hydroxysterol oxidase-like enzyme, the quinone-oxidase prx3 that forms the quinone-type-structure in the bicyclic nucleus of aristolochene with the C8-oxo group and the C-3 hydroxyl group, and the P450 monooxygenase ORF6 that introduces the epoxide at the double bond between carbons 1 and 2. No monoxy or dioxy-intermediates have been reported to be released to the broth, so these three early oxidative reactions may be coupled together. Eremofortin B is further oxidized by another P450 monooxygenase, that introduces a second epoxide between carbons 7 and 11 prior to acetylation to eremofortin A by the acetyltransferase ORF8. The second epoxidation may be performed by a second P450 monooxygenase. After the acetylation step, eremofortin A is converted to eremofortin C and then to PR-toxin. First the conversion of eremofortin A to eremofortin C proceeds by oxidation of the side chain of the molecule at C-12 and is catalyzed by the short-chain oxidoreductase prx1. The cytochrome P450 monooxygenase ORF6 is probably also involved in this step. The primary alcohol formed at C-12 is finally oxidized by the short-chain alcohol dehydrogenase prx4 that forms PR-toxin. This is Cytochrome P450 monooxygenase ORF9 from Penicillium roqueforti (strain FM164).